Consider the following 310-residue polypeptide: MDEHGVQTPQVTSLIVVAGLSGAGKSTALKSLEDIGYLWIDNPPLLALPGLMRELSESTEDSHVAVGLHMREHGRDPDAWQRLQPILQEMTARLELLYLEADSDILVKRFRETRRRHPLAGRNMAGGGGEALRTVKEAVEEERLRMQPVRAQANLVIDTTYLRPQMLQERVADLFRMDAHNTQGITLFVRSLGFKYGSNTDADMVLDARFLQNPYYDLALRELTGMDAPVRAFLDRDGEAEQFLTHLQGLFGYLIPRYIKERKCYFTVDIGCTGGQHRSVYLVDRLGEMLGQMGYRVVVRHRDMHRKSAK.

ATP is bound at residue 19–26 (GLSGAGKS).

Belongs to the RapZ-like family.

Functionally, displays ATPase and GTPase activities. The protein is Nucleotide-binding protein Mmc1_3333 of Magnetococcus marinus (strain ATCC BAA-1437 / JCM 17883 / MC-1).